Reading from the N-terminus, the 174-residue chain is Glutaredoxin-C5, chloroplastic (174 aa).

A chloroplast-targeting transit peptide spans 1–51; sequence MAVTAFNTLKLVSSSLDPIPSVSCSSYSFSLIYVGSPYKRCLKQSCSVRAM. Threonine 52 carries the post-translational modification N-acetylthreonine. The residue at position 90 (cysteine 90) is an S-glutathionyl cysteine; partial. Cysteine 90 and cysteine 93 are joined by a disulfide. Residues 93 to 171 form the Glutaredoxin domain; sequence CTEVKTLFKR…LMLAEANGKN (79 aa). Residues valine 135, cysteine 148, and threonine 149 each coordinate glutathione. Cysteine 148 is modified (S-glutathionyl cysteine; partial).

The protein belongs to the glutaredoxin family. CPYC subfamily. Monomeric apoprotein and homodimeric holoprotein containing a [2Fe-2S] cluster. No in vitro interactions with SUFE1, BOLA1, BOLA2 or BOLA4. Post-translationally, glutathionylated.

It localises to the plastid. The protein localises to the chloroplast. In terms of biological role, has a glutathione-disulfide oxidoreductase activity in the presence of NADPH and glutathione reductase. Reduces low molecular weight disulfides and proteins. Can assemble a [2Fe-2S] cluster, but cannot transfer it to an apoferredoxin. This is Glutaredoxin-C5, chloroplastic from Arabidopsis thaliana (Mouse-ear cress).